We begin with the raw amino-acid sequence, 365 residues long: Popy Class I histocompatibility antigen, A-1 alpha chain (365 aa).

The signal sequence occupies residues 1–24 (MAIMAPRTLLLLLSGALALTQTWA). The alpha-1 stretch occupies residues 25–114 (GSHSMRYFST…LRGYYNQSDG (90 aa)). Over 25–308 (GSHSMRYFST…ELSSQPTIPI (284 aa)) the chain is Extracellular. N110 carries an N-linked (GlcNAc...) asparagine glycan. The interval 115 to 206 (GSHTIQRMFG…ENGKETLQRT (92 aa)) is alpha-2. Cystine bridges form between C125–C188 and C227–C283. Positions 207-298 (DAPKTHMTHH…GLPEPLTLRW (92 aa)) are alpha-3. Positions 209–297 (PKTHMTHHPV…EGLPEPLTLR (89 aa)) constitute an Ig-like C1-type domain. The connecting peptide stretch occupies residues 299–308 (ELSSQPTIPI). A helical membrane pass occupies residues 309 to 332 (VGIIAGLVLLGAVITGAVVAAVMW). The Cytoplasmic segment spans residues 333–365 (RRRNSDRKGGSYSQAASNDSAQGSDVSLTACKV). Residues 340–365 (KGGSYSQAASNDSAQGSDVSLTACKV) form a disordered region. Position 343 is a phosphoserine (S343). Over residues 343–359 (SYSQAASNDSAQGSDVS) the composition is skewed to polar residues. Y344 bears the Phosphotyrosine mark. S345, S349, S352, S356, and S359 each carry phosphoserine.

Belongs to the MHC class I family. Heterodimer of an alpha chain and a beta chain (beta-2-microglobulin).

The protein localises to the membrane. Functionally, involved in the presentation of foreign antigens to the immune system. The protein is Popy Class I histocompatibility antigen, A-1 alpha chain of Pongo pygmaeus (Bornean orangutan).